The following is a 412-amino-acid chain: Phosphatidylinositol 3,4,5-trisphosphate 3-phosphatase and protein-tyrosine-phosphatase PTEN1 (412 aa).

One can recognise a Phosphatase tensin-type domain in the interval 42-211 (RRLIIGGYDL…KYWSDLLSFS (170 aa)). C152 acts as the Phosphocysteine intermediate in catalysis. The region spanning 239-396 (VDSVFFVVSE…FSLELLFGPA (158 aa)) is the C2 tensin-type domain.

It belongs to the PTEN phosphatase protein family. As to expression, expressed exclusively in pollen grains during the late stage of development (at protein level).

It carries out the reaction O-phospho-L-tyrosyl-[protein] + H2O = L-tyrosyl-[protein] + phosphate. It catalyses the reaction a 1,2-diacyl-sn-glycero-3-phospho-(1D-myo-inositol-3,4,5-trisphosphate) + H2O = a 1,2-diacyl-sn-glycero-3-phospho-(1D-myo-inositol-4,5-bisphosphate) + phosphate. Its activity is regulated as follows. Inhibited by vanadate. In terms of biological role, protein tyrosine phosphatase that also exhibits lipid phosphatase activity. Can use phosphatidylinositol substrates such as PtdIns(3,4,5)P(3) as substrate. Pollen-specific phosphatase required for pollen development. The sequence is that of Phosphatidylinositol 3,4,5-trisphosphate 3-phosphatase and protein-tyrosine-phosphatase PTEN1 from Arabidopsis thaliana (Mouse-ear cress).